Consider the following 299-residue polypeptide: Probable lipid kinase YegS-like (299 aa).

The DAGKc domain maps to 2–133; sequence EKNPITLLIL…IDIAKVNDGH (132 aa). ATP-binding positions include Thr-40, 66–72, and Thr-95; that span reads GDGTVNE. 3 residues coordinate Mg(2+): Leu-215, Asp-218, and Leu-220. Glu-271 functions as the Proton acceptor in the catalytic mechanism.

This sequence belongs to the diacylglycerol/lipid kinase family. YegS lipid kinase subfamily. Requires Mg(2+) as cofactor. Ca(2+) serves as cofactor.

It is found in the cytoplasm. Probably phosphorylates lipids; the in vivo substrate is unknown. This is Probable lipid kinase YegS-like from Pectobacterium atrosepticum (strain SCRI 1043 / ATCC BAA-672) (Erwinia carotovora subsp. atroseptica).